A 390-amino-acid chain; its full sequence is Succinate--CoA ligase [ADP-forming] subunit beta (390 aa).

Residues 9-244 (KSLFQQYGIP…ISQEDVREAK (236 aa)) form the ATP-grasp domain. ATP-binding residues include Lys46, Glu99, Leu102, and Glu107. Positions 199 and 213 each coordinate Mg(2+). Substrate-binding positions include Asn264 and 321 to 323 (GIV).

This sequence belongs to the succinate/malate CoA ligase beta subunit family. Heterotetramer of two alpha and two beta subunits. Mg(2+) is required as a cofactor.

It catalyses the reaction succinate + ATP + CoA = succinyl-CoA + ADP + phosphate. The enzyme catalyses GTP + succinate + CoA = succinyl-CoA + GDP + phosphate. Its pathway is carbohydrate metabolism; tricarboxylic acid cycle; succinate from succinyl-CoA (ligase route): step 1/1. Functionally, succinyl-CoA synthetase functions in the citric acid cycle (TCA), coupling the hydrolysis of succinyl-CoA to the synthesis of either ATP or GTP and thus represents the only step of substrate-level phosphorylation in the TCA. The beta subunit provides nucleotide specificity of the enzyme and binds the substrate succinate, while the binding sites for coenzyme A and phosphate are found in the alpha subunit. This is Succinate--CoA ligase [ADP-forming] subunit beta from Hydrogenovibrio crunogenus (strain DSM 25203 / XCL-2) (Thiomicrospira crunogena).